The sequence spans 291 residues: ATP synthase gamma chain (291 aa).

The protein belongs to the ATPase gamma chain family. F-type ATPases have 2 components, CF(1) - the catalytic core - and CF(0) - the membrane proton channel. CF(1) has five subunits: alpha(3), beta(3), gamma(1), delta(1), epsilon(1). CF(0) has three main subunits: a, b and c.

The protein localises to the cell inner membrane. Functionally, produces ATP from ADP in the presence of a proton gradient across the membrane. The gamma chain is believed to be important in regulating ATPase activity and the flow of protons through the CF(0) complex. The chain is ATP synthase gamma chain from Neisseria meningitidis serogroup A / serotype 4A (strain DSM 15465 / Z2491).